We begin with the raw amino-acid sequence, 258 residues long: Thrombin-like enzyme CPI-enzyme 2 (258 aa).

Residues 1–18 (MVLIRVLANLLILQLSYA) form the signal peptide. Residues 19–24 (QKSSEL) constitute a propeptide that is removed on maturation. The Peptidase S1 domain occupies 25-249 (VIGGDECNIN…YTDWIENIIA (225 aa)). 6 disulfide bridges follow: C31-C163, C50-C66, C98-C256, C142-C210, C174-C189, and C200-C225. N44 is a glycosylation site (N-linked (GlcNAc...) asparagine). H65 functions as the Charge relay system in the catalytic mechanism. N-linked (GlcNAc...) asparagine glycosylation is found at N79 and N103. The Charge relay system role is filled by D110. Residue N121 is glycosylated (N-linked (GlcNAc...) asparagine). Residue S204 is the Charge relay system of the active site.

It belongs to the peptidase S1 family. Snake venom subfamily. Monomer. In terms of processing, N-glycosylated. As to expression, expressed by the venom gland.

Its subcellular location is the secreted. Its function is as follows. Thrombin-like snake venom serine protease that cleaves fibrinogen beta (FGB) releasing fibrinopeptide B. Promotes capillary permeability-increasing activity through the release of peptides from the beta-chain of fibrinogen. The protein is Thrombin-like enzyme CPI-enzyme 2 of Gloydius ussuriensis (Ussuri mamushi).